We begin with the raw amino-acid sequence, 305 residues long: Undecaprenyl-diphosphatase (305 aa).

Transmembrane regions (helical) follow at residues 18 to 38, 55 to 75, 103 to 123, 130 to 150, 187 to 207, 225 to 245, 246 to 266, and 284 to 304; these read GVTELFPVSSLGHAVLVPALV, YLAFIVGLHVATAAALLVFFW, WLIVVGTIPVGLAGLALEQLF, PVPAAAFLLLNGVALYAGEVL, GVLIGAAQILALLPGISRSGI, FSFLLATPIILAAGVYKIPEL, FGPLGAGIGGQVLAGSIASFV, and LTPFAIYCAVAGGASLVWLAL.

The protein belongs to the UppP family.

It is found in the cell membrane. The enzyme catalyses di-trans,octa-cis-undecaprenyl diphosphate + H2O = di-trans,octa-cis-undecaprenyl phosphate + phosphate + H(+). In terms of biological role, catalyzes the dephosphorylation of undecaprenyl diphosphate (UPP). Confers resistance to bacitracin. The polypeptide is Undecaprenyl-diphosphatase (Mycolicibacterium paratuberculosis (strain ATCC BAA-968 / K-10) (Mycobacterium paratuberculosis)).